The sequence spans 232 residues: 7-cyano-7-deazaguanine synthase (232 aa).

Residue 8–18 (FSGGQDSTTCL) participates in ATP binding. 4 residues coordinate Zn(2+): cysteine 189, cysteine 198, cysteine 201, and cysteine 204.

It belongs to the QueC family. It depends on Zn(2+) as a cofactor.

The enzyme catalyses 7-carboxy-7-deazaguanine + NH4(+) + ATP = 7-cyano-7-deazaguanine + ADP + phosphate + H2O + H(+). The protein operates within purine metabolism; 7-cyano-7-deazaguanine biosynthesis. Its function is as follows. Catalyzes the ATP-dependent conversion of 7-carboxy-7-deazaguanine (CDG) to 7-cyano-7-deazaguanine (preQ(0)). The sequence is that of 7-cyano-7-deazaguanine synthase from Serratia proteamaculans (strain 568).